Here is a 107-residue protein sequence, read N- to C-terminus: Anti-adapter protein IraM (107 aa).

The protein belongs to the IraM/RssC family.

The protein localises to the cytoplasm. Inhibits RpoS proteolysis by regulating RssB activity, thereby increasing the stability of the sigma stress factor RpoS during magnesium starvation. This chain is Anti-adapter protein IraM, found in Shigella sonnei (strain Ss046).